Here is a 475-residue protein sequence, read N- to C-terminus: MQIQANTVGTQAVAHHSDATTGVGRMGQMEARQVATGQDAILLGSRSEPQKGQGLLSRLGAQLARPFVAIKEWISNLLGTDKRAAAPKAQTAVSPEDLQRLMKQAAFGSSLGGFAKADVLNNITGEQLGKDHASLATGNGPLRSLCTALQAVVIGSQQPQLRELATGLLARPIAGIPLQQWGSVGGKVTELLTSAPPELLKEAMSQLHTAMGEVADLQRAVKAEVAGEPARSATTAAAVAPLQSGESEVNVEPADKALAEGLQEQFGLEAEQYLGEQPHGTYSDAEVMALGLYTNGEYQHLNRSLRQEKQLDAGQALIDQGMSTAFEKSTPTEQLIKTFRGTHGGDAFNEVAEGQVGHDVAYLSTSRDPKVATNFGGSGSISTIFGRSGIDVSDISVEGDEQEILYNKETDMRVLLSAKDERGVTRRVLEEASLGEQSGHSKGLLDGLDLARGAGGADKPQEQDIRLKMRGLDLA.

Positions 93–226 constitute a Bacterial Rho-GAP domain; the sequence is VSPEDLQRLM…LQRAVKAEVA (134 aa). In terms of domain architecture, TR mART core spans 260-436; sequence EGLQEQFGLE…RVLEEASLGE (177 aa). Residues Arg-340, Ser-364, and Glu-403 contribute to the active site.

It localises to the secreted. Directly involved in the toxicity for RTG-2 (rainbow trout gonad) fish cells. The protein is ADP-ribosyltransferase toxin AexT (aexT) of Aeromonas salmonicida.